The chain runs to 561 residues: DNA ligase B (561 aa).

Lys125 (N6-AMP-lysine intermediate) is an active-site residue.

The protein belongs to the NAD-dependent DNA ligase family. LigB subfamily.

The catalysed reaction is NAD(+) + (deoxyribonucleotide)n-3'-hydroxyl + 5'-phospho-(deoxyribonucleotide)m = (deoxyribonucleotide)n+m + AMP + beta-nicotinamide D-nucleotide.. In terms of biological role, catalyzes the formation of phosphodiester linkages between 5'-phosphoryl and 3'-hydroxyl groups in double-stranded DNA using NAD as a coenzyme and as the energy source for the reaction. The chain is DNA ligase B from Salmonella gallinarum (strain 287/91 / NCTC 13346).